The following is a 262-amino-acid chain: Ribosomal RNA small subunit methyltransferase A (262 aa).

S-adenosyl-L-methionine is bound by residues His-13, Leu-15, Gly-40, Glu-61, Asp-85, and Asn-103.

The protein belongs to the class I-like SAM-binding methyltransferase superfamily. rRNA adenine N(6)-methyltransferase family. RsmA subfamily.

It is found in the cytoplasm. It carries out the reaction adenosine(1518)/adenosine(1519) in 16S rRNA + 4 S-adenosyl-L-methionine = N(6)-dimethyladenosine(1518)/N(6)-dimethyladenosine(1519) in 16S rRNA + 4 S-adenosyl-L-homocysteine + 4 H(+). In terms of biological role, specifically dimethylates two adjacent adenosines (A1518 and A1519) in the loop of a conserved hairpin near the 3'-end of 16S rRNA in the 30S particle. May play a critical role in biogenesis of 30S subunits. This Bordetella petrii (strain ATCC BAA-461 / DSM 12804 / CCUG 43448) protein is Ribosomal RNA small subunit methyltransferase A.